Here is a 208-residue protein sequence, read N- to C-terminus: V-type ATP synthase subunit D (208 aa).

Belongs to the V-ATPase D subunit family.

Functionally, produces ATP from ADP in the presence of a proton gradient across the membrane. This Streptococcus pyogenes serotype M3 (strain ATCC BAA-595 / MGAS315) protein is V-type ATP synthase subunit D.